The chain runs to 430 residues: Glutamate-1-semialdehyde 2,1-aminomutase 2 (430 aa).

K269 bears the N6-(pyridoxal phosphate)lysine mark.

This sequence belongs to the class-III pyridoxal-phosphate-dependent aminotransferase family. HemL subfamily. As to quaternary structure, homodimer. It depends on pyridoxal 5'-phosphate as a cofactor.

The protein localises to the cytoplasm. It catalyses the reaction (S)-4-amino-5-oxopentanoate = 5-aminolevulinate. It functions in the pathway porphyrin-containing compound metabolism; protoporphyrin-IX biosynthesis; 5-aminolevulinate from L-glutamyl-tRNA(Glu): step 2/2. In Lysinibacillus sphaericus (strain C3-41), this protein is Glutamate-1-semialdehyde 2,1-aminomutase 2.